A 345-amino-acid chain; its full sequence is Anthranilate phosphoribosyltransferase (345 aa).

5-phospho-alpha-D-ribose 1-diphosphate contacts are provided by residues glycine 86, 89–90 (GD), threonine 94, 96–99 (NIST), 114–122 (KHGNRNLSS), and alanine 126. An anthranilate-binding site is contributed by glycine 86. Serine 98 contacts Mg(2+). Asparagine 117 is a binding site for anthranilate. Position 172 (arginine 172) interacts with anthranilate. The Mg(2+) site is built by aspartate 231 and glutamate 232.

This sequence belongs to the anthranilate phosphoribosyltransferase family. As to quaternary structure, homodimer. Requires Mg(2+) as cofactor.

The catalysed reaction is N-(5-phospho-beta-D-ribosyl)anthranilate + diphosphate = 5-phospho-alpha-D-ribose 1-diphosphate + anthranilate. The protein operates within amino-acid biosynthesis; L-tryptophan biosynthesis; L-tryptophan from chorismate: step 2/5. Functionally, catalyzes the transfer of the phosphoribosyl group of 5-phosphorylribose-1-pyrophosphate (PRPP) to anthranilate to yield N-(5'-phosphoribosyl)-anthranilate (PRA). The chain is Anthranilate phosphoribosyltransferase from Jannaschia sp. (strain CCS1).